Consider the following 348-residue polypeptide: Erlin-1 (348 aa).

The Cytoplasmic portion of the chain corresponds to 1–7 (MNMTQAR). Residues 8-28 (VLVAAVVGLVAVLLYASIHKI) traverse the membrane as a helical segment. At 29–348 (EEGHLAVYYR…NLIQNKESTG (320 aa)) the chain is on the lumenal side. Asparagine 108 carries N-linked (GlcNAc...) asparagine glycosylation. An N6-acetyllysine modification is found at lysine 269. A compositionally biased stretch (basic and acidic residues) spans 321–333 (TGRESSHPSKEAL). Residues 321-348 (TGRESSHPSKEALEPSGENLIQNKESTG) form a disordered region. The span at 339 to 348 (NLIQNKESTG) shows a compositional bias: polar residues.

This sequence belongs to the band 7/mec-2 family. In terms of assembly, forms a heteromeric complex with ERLIN2. In complex with ERLIN2, interacts with RNF170. Interacts with AMFR and SYVN1. In terms of processing, deubiquitinated by USP25; leading to stabilization.

The protein resides in the endoplasmic reticulum membrane. Functionally, component of the ERLIN1/ERLIN2 complex which mediates the endoplasmic reticulum-associated degradation (ERAD) of inositol 1,4,5-trisphosphate receptors (IP3Rs). Involved in regulation of cellular cholesterol homeostasis by regulation the SREBP signaling pathway. Binds cholesterol and may promote ER retention of the SCAP-SREBF complex. The polypeptide is Erlin-1 (Pongo abelii (Sumatran orangutan)).